The primary structure comprises 304 residues: Ornithine carbamoyltransferase (304 aa).

Carbamoyl phosphate contacts are provided by residues Ser-47–Thr-50, Arg-98, and His-125–Gln-128. L-ornithine is bound by residues Asn-156, Asp-221, and Ser-225–Met-226. Residues Cys-262 to Leu-263 and Arg-290 contribute to the carbamoyl phosphate site.

The protein belongs to the aspartate/ornithine carbamoyltransferase superfamily. OTCase family.

Its subcellular location is the cytoplasm. The enzyme catalyses carbamoyl phosphate + L-ornithine = L-citrulline + phosphate + H(+). It functions in the pathway amino-acid biosynthesis; L-arginine biosynthesis; L-arginine from L-ornithine and carbamoyl phosphate: step 1/3. Its function is as follows. Reversibly catalyzes the transfer of the carbamoyl group from carbamoyl phosphate (CP) to the N(epsilon) atom of ornithine (ORN) to produce L-citrulline. The sequence is that of Ornithine carbamoyltransferase from Methanococcus maripaludis (strain C5 / ATCC BAA-1333).